Consider the following 219-residue polypeptide: Large ribosomal subunit protein uL16 (219 aa).

The protein belongs to the universal ribosomal protein uL16 family. Component of the large ribosomal subunit. Mature ribosomes consist of a small (40S) and a large (60S) subunit. The 40S subunit contains about 33 different proteins and 1 molecule of RNA (18S). The 60S subunit contains about 49 different proteins and 3 molecules of RNA (28S, 5.8S and 5S).

In Bombyx mandarina (Wild silk moth), this protein is Large ribosomal subunit protein uL16 (RpL10).